The sequence spans 1114 residues: Kinesin-like protein KIN-12B (1114 aa).

The segment at Met-1 to Gln-119 is disordered. The span at Ser-98–Ala-107 shows a compositional bias: low complexity. The Kinesin motor domain occupies Gly-117–Ile-459. Gly-197 to Thr-204 contributes to the ATP binding site. Coiled-coil stretches lie at residues Val-772–Leu-810 and Glu-999–Val-1043. Residues Leu-1055–Pro-1065 show a composition bias toward polar residues. The segment at Leu-1055 to Asp-1081 is disordered.

This sequence belongs to the TRAFAC class myosin-kinesin ATPase superfamily. Kinesin family. KIN-12 subfamily.

In Oryza sativa subsp. japonica (Rice), this protein is Kinesin-like protein KIN-12B.